A 53-amino-acid chain; its full sequence is Neuronal protein NP-190 (53 aa).

Mainly expressed in the fetal brain where it is specifically localized to the proximal axonal segments, cell bodies and growth cones. Lower level of expression was also detected in the fetal heart and the skeletal muscle. No expression in kidney, liver, lung or spleen.

It localises to the membrane. In terms of biological role, neuronal antigen that may play a role in brain development. May be involved in neurite formation or axonal guidance. The chain is Neuronal protein NP-190 from Sus scrofa (Pig).